The primary structure comprises 223 residues: Ribosome maturation factor RimM (223 aa).

In terms of domain architecture, PRC barrel spans 142 to 223; that stretch reads ADEFYWVDLI…RIVVDWEADY (82 aa).

This sequence belongs to the RimM family. As to quaternary structure, binds ribosomal protein uS19.

It is found in the cytoplasm. In terms of biological role, an accessory protein needed during the final step in the assembly of 30S ribosomal subunit, possibly for assembly of the head region. Essential for efficient processing of 16S rRNA. May be needed both before and after RbfA during the maturation of 16S rRNA. It has affinity for free ribosomal 30S subunits but not for 70S ribosomes. The sequence is that of Ribosome maturation factor RimM from Burkholderia multivorans (strain ATCC 17616 / 249).